The chain runs to 276 residues: uncharacterized protein (276 aa).

Positions 1 to 4 are cleaved as a propeptide — leader sequence; the sequence is MNRG. An N-methylmethionine modification is found at Met-5. Residues 5-26 form a helical membrane-spanning segment; sequence MTLIELLVALALSIILSLGLYY.

Its subcellular location is the membrane. This is an uncharacterized protein from Aquifex aeolicus (strain VF5).